Reading from the N-terminus, the 338-residue chain is Heme-dependent oxidative N-demethylase alpha subunit (338 aa).

Heme b is bound by residues Tyr38 and His194. Catalysis depends on Arg224, which acts as the Proton donor. Residue Asn226 participates in heme b binding. Glu266 contacts dimethylamine. Tyr317 and Lys318 together coordinate heme b.

In terms of assembly, the heme-dependent oxidative N-demethylase (HODM) is a heterotetramer composed of a catalytic alpha subunit, a FMN/2Fe-2S-dependent oxidoreductase beta subunit, a gamma subunit with putative aminotransferase activity, and a delta subunit of unknown function.

The enzyme catalyses dimethylamine + NADPH + O2 + H(+) = methylamine + formaldehyde + NADP(+) + H2O. Its function is as follows. Component of the heme-dependent oxidative N-demethylase (HODM) enzyme, that catalyzes the NADPH-dependent oxidation of dimethylamine (DMA) to methylamine (MA) and formaldehyde. Functions in bacterial methylated amine catabolism, linking alkylamine oxidation to the tetrahydrofolate C1 pool. The alpha subunit of HODM binds heme, oxygen and DMA, and serves as the site of the oxidative N-demethylase activity. This is Heme-dependent oxidative N-demethylase alpha subunit from Ectopseudomonas mendocina (strain ymp) (Pseudomonas mendocina).